A 378-amino-acid polypeptide reads, in one-letter code: Ferredoxin--NADP reductase, embryo isozyme, chloroplastic (378 aa).

The transit peptide at 1–62 (MASALGAQAS…SRHMNKIFSM (62 aa)) directs the protein to the chloroplast. The 129-residue stretch at 93-221 (KEPYTATIVS…TGPSGKIMLL (129 aa)) folds into the FAD-binding FR-type domain. FAD-binding positions include 153–156 (RLYS), 174–176 (CVR), Tyr-180, 195–197 (ICS), and Thr-237. Residues Ser-156 and Arg-176 each contribute to the NADP(+) site. NADP(+)-binding positions include Thr-237, 269 to 270 (VA), 299 to 300 (SR), Lys-309, 337 to 338 (GL), and Glu-376.

It belongs to the ferredoxin--NADP reductase type 1 family. FAD is required as a cofactor.

The protein localises to the plastid. Its subcellular location is the chloroplast. It carries out the reaction 2 reduced [2Fe-2S]-[ferredoxin] + NADP(+) + H(+) = 2 oxidized [2Fe-2S]-[ferredoxin] + NADPH. Its pathway is energy metabolism; photosynthesis. In terms of biological role, may play a key role in regulating the relative amounts of cyclic and non-cyclic electron flow to meet the demands of the plant for ATP and reducing power. Is involved in nitrate assimilation. In Oryza sativa subsp. japonica (Rice), this protein is Ferredoxin--NADP reductase, embryo isozyme, chloroplastic.